The chain runs to 65 residues: MPKLKTHRGLAKRIKISGSGKYLRKKAGKSHLLSGKSRKRKRNLKKTVVVDATNVKAVKKLLPYL.

This sequence belongs to the bacterial ribosomal protein bL35 family.

The sequence is that of Large ribosomal subunit protein bL35 from Caldicellulosiruptor bescii (strain ATCC BAA-1888 / DSM 6725 / KCTC 15123 / Z-1320) (Anaerocellum thermophilum).